We begin with the raw amino-acid sequence, 586 residues long: Phosphomethylpyrimidine synthase (586 aa).

The interval 1–58 is disordered; that stretch reads MKQSVSAEQIELKSSLPGSKKVYVDGPREGMKVPMREIEQSDTNGVPNPPIRVYDTSG. Residues 22-39 are compositionally biased toward basic and acidic residues; it reads VYVDGPREGMKVPMREIE. Substrate is bound by residues Asn-193, Met-222, Tyr-251, His-287, 307 to 309, 348 to 351, and Glu-387; these read SRG and DGLR. Residue His-391 participates in Zn(2+) binding. Substrate is bound at residue Tyr-414. Residue His-455 coordinates Zn(2+). Positions 535, 538, and 543 each coordinate [4Fe-4S] cluster.

Belongs to the ThiC family. It depends on [4Fe-4S] cluster as a cofactor.

The enzyme catalyses 5-amino-1-(5-phospho-beta-D-ribosyl)imidazole + S-adenosyl-L-methionine = 4-amino-2-methyl-5-(phosphooxymethyl)pyrimidine + CO + 5'-deoxyadenosine + formate + L-methionine + 3 H(+). It participates in cofactor biosynthesis; thiamine diphosphate biosynthesis. Catalyzes the synthesis of the hydroxymethylpyrimidine phosphate (HMP-P) moiety of thiamine from aminoimidazole ribotide (AIR) in a radical S-adenosyl-L-methionine (SAM)-dependent reaction. This chain is Phosphomethylpyrimidine synthase, found in Bacillus thuringiensis (strain Al Hakam).